Consider the following 314-residue polypeptide: DNA-directed RNA polymerase subunit alpha (314 aa).

An alpha N-terminal domain (alpha-NTD) region spans residues Met-1–Thr-228. The alpha C-terminal domain (alpha-CTD) stretch occupies residues Lys-245–Asp-314.

The protein belongs to the RNA polymerase alpha chain family. Homodimer. RNAP is composed of a core of 2 alpha, a beta and a beta' subunit. The core is associated with a delta subunit, and at least one of epsilon or omega. When a sigma factor is associated with the core the holoenzyme is formed, which can initiate transcription.

It catalyses the reaction RNA(n) + a ribonucleoside 5'-triphosphate = RNA(n+1) + diphosphate. Its function is as follows. DNA-dependent RNA polymerase catalyzes the transcription of DNA into RNA using the four ribonucleoside triphosphates as substrates. The sequence is that of DNA-directed RNA polymerase subunit alpha from Bacillus subtilis (strain 168).